The chain runs to 214 residues: Adenylate kinase (214 aa).

10 to 15 (GAGKGT) serves as a coordination point for ATP. The interval 30 to 59 (STGDMLRAAIKAGTELGKQAKAVIDAGQLV) is NMP. AMP-binding positions include Thr31, Arg36, 57 to 59 (QLV), 85 to 88 (GFPR), and Gln92. The LID stretch occupies residues 122–159 (GRRAHLPSGRTYHVVYNPPKVEGKDDVTGEDLVVRDDD). ATP contacts are provided by residues Arg123 and 132 to 133 (TY). Residues Arg156 and Arg167 each coordinate AMP. An ATP-binding site is contributed by Lys200.

Belongs to the adenylate kinase family. In terms of assembly, monomer.

Its subcellular location is the cytoplasm. The catalysed reaction is AMP + ATP = 2 ADP. It functions in the pathway purine metabolism; AMP biosynthesis via salvage pathway; AMP from ADP: step 1/1. Its function is as follows. Catalyzes the reversible transfer of the terminal phosphate group between ATP and AMP. Plays an important role in cellular energy homeostasis and in adenine nucleotide metabolism. The sequence is that of Adenylate kinase from Vibrio vulnificus (strain CMCP6).